The chain runs to 170 residues: Superoxide dismutase [Fe] (170 aa).

4 residues coordinate Fe cation: His27, His81, Asp163, and His167.

This sequence belongs to the iron/manganese superoxide dismutase family. Homodimer. Fe cation is required as a cofactor.

It catalyses the reaction 2 superoxide + 2 H(+) = H2O2 + O2. Functionally, destroys superoxide anion radicals which are normally produced within the cells and which are toxic to biological systems. The protein is Superoxide dismutase [Fe] (sodA) of Raoultella planticola (Klebsiella planticola).